Consider the following 1116-residue polypeptide: MAYPNDVRNVWDVYNVFRDVPNREHLIRDIRNGLVTVRNLTNMLTNMERDDQLIIAQLSNMMKSLSIGIEKAQNELSKLKTTDADRAAVLADYQTSVLNIERNTMLLTGYFKQLVLDLTGYVGASVYPILPFMITGDQSMMVDSINVNMKNVFDDKHEQEIVLPIHPACFVSTITEDTSSVVYADGDELYSVHVRHENMTMYVNVLGETVETRQLSMIGESIVPDDFAPSLLILRFSQDSVGEVFYLSHDNIKKFLGHSLEYTDKYVIFDVARRASTTRNTITDGFCSVDGVPYLDGRFIYQPSGISADSNICAIYNSYVLDVLRYITECEVDTLRSVYDRTSSTVFSKTDVLRPRLLTMQSNISALSAATPQLANDVITSDSTDLLSLGTVLTVSNEFTADDTTLSTSLAGHCQVDYSEGSPQDKSMSIPVSCDSSQLASSTVHSYSADILGHGLKGDRNLNLMINVPGLMNPQKVTVDYVYSDGYKLNFASVVAPDAPFWINATLQLSLSPSAHNMLSKLTPLDNDACPGLKAQANTPVLVSMTINLDDATPALGGEVIQNCVFKIHHGDDVYSFVTDFDVISYTSTSGTNCLKLISSVDITSQLPSDMWIYVMNGSPDAAFISGDSVNMSSVDWHQSTSQTVGNYVYATMKAYWNVTSYDVEARPYATYVPGKINFTAIDHADVFVDDYNTGVNSYVIVNSRIYYKGNSSIYEVPSGSFIKVSYFTSPLKNPTVDAYNAEISRNSAYLIKANASLDSVAAMLSNISNRIDAMERLMEPTRAHRIAGVVSSIGGVISLGMPLLGAIVVTIGSIISIADPDKQGIDYHSVANAFMSWCQYAAVCRYEYGLLKRGDEKLDVLSFMPKRVVSDFKNKPDVISLPELGESVLRGSSTDYLDTEINIIYNDMQLLGQGKLSDWLNKTVSKVENNAANFFERNLVKSLANKEVLPVHARVEITQTEKIGDVYRTTILYTGINEGSYLGGDVFASRLGDKNILRMNGFESGPGRFKAIVESTTEVGNFRVVDWTVSGMSRYEIYAAAGEVYPSKDPSHADVQLLYESIVRDLTTRDGSFVLKHHDVLLLPGQLDAFEELIIKNASNYQYAFIGSNCSKLCA.

The 188-residue stretch at 929–1116 folds into the PPPDE domain; it reads ENNAANFFER…IGSNCSKLCA (188 aa). Catalysis depends on residues H953 and C1111.

The protein belongs to the phytoreovirus minor outer capsid protein P2 family. As to quaternary structure, interacts with host ent-kaurene oxidases OSKO1, OSKO2, OSKOL4 and OSKOL5; this interaction.

It localises to the virion. The protein localises to the host cytoplasm. In terms of biological role, minor capsid protein present in the outer capsid, which is required for adsorption of the virus onto host insect cells (Potential). Could play a role in the host plant virus induced dwarfism. The protein is Minor outer capsid protein P2 of Rice dwarf virus (isolate Fujian) (RDV).